Reading from the N-terminus, the 514-residue chain is MEMAKANGWAVVCTSTNTNTVPIYSKYTRCTELRRVDDNDIYKLATILDVNGCWRKLMSIIPKRLDAQACSAPGALNYQEIAAKVGLKYTAQQISLIDGTAERLTPGQSISQVMIDEWKTSGKLNERPTVGVLLQLLVHAEIYSAADFVALHFLNEPKPERPTDGPAAHISLDLCSEDLSEDMDVEDGASYQPNTSALNAAVEQARGTGMNLDYFDKHMVRRDKSVPQQLENGTSSTVPVPPPRAARSSRLLKATASNVAPTTASNAPSASNTANVPNLSILNASSKKLAASSEQTLQPQNIPNLSILNGSSEAVLMATTSTTLDAGKSDNASNGRSSASTSTATIPNVPLITLLIENSSCEISDASDATQITSKSTATKTVPDMSTASYNNLPAISALNLNIASGAGELDGNGAKARGDNADNNSSGTNSLSNDDDEQKEDDDDDDDDDVVDVDDEEADVSLPNLSNSDHNDSSLTTVTCTSGENSFEFTNDSSSASNDDYTNNIPNLSELQQ.

Disordered regions lie at residues 226–250, 255–274, 324–343, 366–385, and 413–514; these read VPQQLENGTSSTVPVPPPRAARSSR, TASNVAPTTASNAPSASNTA, LDAGKSDNASNGRSSASTST, ASDATQITSKSTATKTVPDM, and NGAK…ELQQ. A compositionally biased stretch (low complexity) spans 259-274; it reads VAPTTASNAPSASNTA. The span at 422 to 433 shows a compositional bias: polar residues; that stretch reads ADNNSSGTNSLS. Positions 434 to 460 are enriched in acidic residues; the sequence is NDDDEQKEDDDDDDDDDVVDVDDEEAD. Polar residues predominate over residues 477–514; that stretch reads TTVTCTSGENSFEFTNDSSSASNDDYTNNIPNLSELQQ.

As to expression, maternal and zygotic gene product.

It is found in the cytoplasm. Required for the determination of embryonic dorsoventral polarity. Is involved in transduction of information regulating nuclear import of dorsal protein. This Drosophila virilis (Fruit fly) protein is Protein Tube (tub).